The sequence spans 254 residues: tRNA (guanine-N(7)-)-methyltransferase (254 aa).

Residues 1-11 (MSISDNSREEL) are compositionally biased toward basic and acidic residues. Positions 1 to 25 (MSISDNSREELGELPAGRPLQSEFN) are disordered. S-adenosyl-L-methionine-binding residues include Glu83, Glu108, Asp135, and Asp158. The active site involves Asp158. Residue Lys162 coordinates substrate. Residues 164-169 (RHNKRR) form an interaction with RNA region. Residues Asp194 and 232–235 (TKFE) each bind substrate.

The protein belongs to the class I-like SAM-binding methyltransferase superfamily. TrmB family.

The catalysed reaction is guanosine(46) in tRNA + S-adenosyl-L-methionine = N(7)-methylguanosine(46) in tRNA + S-adenosyl-L-homocysteine. Its pathway is tRNA modification; N(7)-methylguanine-tRNA biosynthesis. Its function is as follows. Catalyzes the formation of N(7)-methylguanine at position 46 (m7G46) in tRNA. This is tRNA (guanine-N(7)-)-methyltransferase from Corynebacterium efficiens (strain DSM 44549 / YS-314 / AJ 12310 / JCM 11189 / NBRC 100395).